Reading from the N-terminus, the 475-residue chain is Legumain (475 aa).

Positions 1-15 (MVMMLVMLSLHGTAA) are cleaved as a signal peptide. A propeptide spanning residues 16–35 (RLNRREWDSVIQLPTEPVDD) is cleaved from the precursor. The active site involves His-158. Residue Cys-200 is the Nucleophile of the active site. A disulfide bridge links Cys-233 with Cys-247. Asn-300 carries an N-linked (GlcNAc...) asparagine glycan. Disulfide bonds link Cys-411-Cys-441 and Cys-423-Cys-458.

The protein belongs to the peptidase C13 family. In terms of assembly, homodimer.

The catalysed reaction is Hydrolysis of proteins and small molecule substrates at -Asn-|-Xaa- bonds.. Its activity is regulated as follows. Repressed by various protease inhibitors including p-chloromercuribenzene sulfonic acid (PCMBS), N-ethylmaleimide, kininogen, elastatinal, cystatin EW and leupeptin. Asparaginyl endopeptidase able to cleave almost all peptide bonds on the carboxyl side of Asn residues, except at the NH2 terminus or second position or with N-glycosylated Asn. Responsible for the maturation (circular permutation) of concanavalin A from its precursor, by performing both cleavage and cleavage-coupled transpeptidation to form conA. The sequence is that of Legumain from Canavalia ensiformis (Jack bean).